The following is a 238-amino-acid chain: Small ribosomal subunit protein uS2c (238 aa).

The protein belongs to the universal ribosomal protein uS2 family.

It localises to the plastid. The protein localises to the chloroplast. The polypeptide is Small ribosomal subunit protein uS2c (rps2) (Nuphar advena (Common spatterdock)).